The sequence spans 120 residues: NAD(P)H-quinone oxidoreductase subunit 3, chloroplastic (120 aa).

3 helical membrane passes run 9–29 (IFWT…LISG), 64–84 (MFAL…PWAM), and 88–108 (VLGV…IVGS).

The protein belongs to the complex I subunit 3 family. As to quaternary structure, NDH is composed of at least 16 different subunits, 5 of which are encoded in the nucleus.

The protein resides in the plastid. Its subcellular location is the chloroplast thylakoid membrane. It carries out the reaction a plastoquinone + NADH + (n+1) H(+)(in) = a plastoquinol + NAD(+) + n H(+)(out). The catalysed reaction is a plastoquinone + NADPH + (n+1) H(+)(in) = a plastoquinol + NADP(+) + n H(+)(out). Functionally, NDH shuttles electrons from NAD(P)H:plastoquinone, via FMN and iron-sulfur (Fe-S) centers, to quinones in the photosynthetic chain and possibly in a chloroplast respiratory chain. The immediate electron acceptor for the enzyme in this species is believed to be plastoquinone. Couples the redox reaction to proton translocation, and thus conserves the redox energy in a proton gradient. The protein is NAD(P)H-quinone oxidoreductase subunit 3, chloroplastic of Piper cenocladum (Ant piper).